Consider the following 491-residue polypeptide: Aspartyl/glutamyl-tRNA(Asn/Gln) amidotransferase subunit B (491 aa).

Belongs to the GatB/GatE family. GatB subfamily. Heterotrimer of A, B and C subunits.

The enzyme catalyses L-glutamyl-tRNA(Gln) + L-glutamine + ATP + H2O = L-glutaminyl-tRNA(Gln) + L-glutamate + ADP + phosphate + H(+). It carries out the reaction L-aspartyl-tRNA(Asn) + L-glutamine + ATP + H2O = L-asparaginyl-tRNA(Asn) + L-glutamate + ADP + phosphate + 2 H(+). Allows the formation of correctly charged Asn-tRNA(Asn) or Gln-tRNA(Gln) through the transamidation of misacylated Asp-tRNA(Asn) or Glu-tRNA(Gln) in organisms which lack either or both of asparaginyl-tRNA or glutaminyl-tRNA synthetases. The reaction takes place in the presence of glutamine and ATP through an activated phospho-Asp-tRNA(Asn) or phospho-Glu-tRNA(Gln). The polypeptide is Aspartyl/glutamyl-tRNA(Asn/Gln) amidotransferase subunit B (Paraburkholderia phytofirmans (strain DSM 17436 / LMG 22146 / PsJN) (Burkholderia phytofirmans)).